Reading from the N-terminus, the 72-residue chain is Prokaryotic ubiquitin-like protein Pup (72 aa).

The span at 1 to 11 (MAQRDTGGGQQ) shows a compositional bias: gly residues. Residues 1–41 (MAQRDTGGGQQRTGRRDDETAEAEVEESGASDLKERHEKLS) form a disordered region. Residues 19–29 (ETAEAEVEESG) show a composition bias toward acidic residues. Positions 22–61 (EAEVEESGASDLKERHEKLSEDVDSLLDEIDDVLEENAEE) form a coiled coil. Positions 28–66 (SGASDLKERHEKLSEDVDSLLDEIDDVLEENAEEFVKGY) are ARC ATPase binding. Residues 32–41 (DLKERHEKLS) show a composition bias toward basic and acidic residues. Deamidated glutamine is present on Gln72. An Isoglutamyl lysine isopeptide (Gln-Lys) (interchain with K-? in acceptor proteins) cross-link involves residue Gln72.

Belongs to the prokaryotic ubiquitin-like protein family. Strongly interacts with the proteasome-associated ATPase ARC through a hydrophobic interface; the interacting region of Pup lies in its C-terminal half. There is one Pup binding site per ARC hexamer ring. Is modified by deamidation of its C-terminal glutamine to glutamate by the deamidase Dop, a prerequisite to the subsequent pupylation process.

Its pathway is protein degradation; proteasomal Pup-dependent pathway. In terms of biological role, protein modifier that is covalently attached to lysine residues of substrate proteins, thereby targeting them for proteasomal degradation. The tagging system is termed pupylation. In Parafrankia sp. (strain EAN1pec), this protein is Prokaryotic ubiquitin-like protein Pup.